The following is a 513-amino-acid chain: Xyloglucan 6-xylosyltransferase 4 (513 aa).

The Cytoplasmic segment spans residues 1 to 39; that stretch reads MFQDGSRSSGSGRGLSTTAVSNGGWRTRGFLRGWQIQNT. The chain crosses the membrane as a helical; Signal-anchor for type II membrane protein span at residues 40–60; that stretch reads LFNNIKFMILCCFVTILILLG. Over 61–513 the chain is Lumenal; sequence TIRVGNLGSS…IRRMHMETKP (453 aa). N-linked (GlcNAc...) asparagine glycosylation is found at asparagine 76, asparagine 110, asparagine 142, asparagine 174, and asparagine 490.

It belongs to the glycosyltransferase 34 family.

The protein localises to the golgi apparatus membrane. It catalyses the reaction Transfers an alpha-D-xylosyl residue from UDP-D-xylose to a glucose residue in xyloglucan, forming an alpha-(1-&gt;6)-D-xylosyl-D-glucose linkage.. Its function is as follows. Xylosyltransferase specific to UDP-D-xylose that accepts cellohexaose as substrate to produce xyloglucan. This chain is Xyloglucan 6-xylosyltransferase 4, found in Arabidopsis thaliana (Mouse-ear cress).